The chain runs to 614 residues: UPF0329 protein ECU03_0090 (614 aa).

Composition is skewed to basic and acidic residues over residues 317–338 (EREE…EESL) and 345–354 (LRMEEKEKSK). The segment at 317–420 (EREEAEKMRG…KKSRSKGHRY (104 aa)) is disordered. The span at 355–364 (SRGKKKKGGK) shows a compositional bias: basic residues. Residues 372–381 (AKMEEEKKDS) show a composition bias toward basic and acidic residues. A compositionally biased stretch (acidic residues) spans 382-394 (EEVEESAEAEVSL). The segment covering 408–420 (SSKKKSRSKGHRY) has biased composition (basic residues).

This sequence belongs to the UPF0329 family.

The polypeptide is UPF0329 protein ECU03_0090 (Encephalitozoon cuniculi (strain GB-M1) (Microsporidian parasite)).